Reading from the N-terminus, the 31-residue chain is Cyclotide psybry A (31 aa).

The segment at residues 1-31 is a cross-link (cyclopeptide (Gly-Asn)); it reads GFNPCGETCIWFPTCHAPGCTCSIANICVRN. 3 cysteine pairs are disulfide-bonded: cysteine 5/cysteine 20, cysteine 9/cysteine 22, and cysteine 15/cysteine 28.

Post-translationally, this is a cyclic peptide.

Its function is as follows. Probably participates in a plant defense mechanism. In Psychotria brachyceras, this protein is Cyclotide psybry A.